A 212-amino-acid polypeptide reads, in one-letter code: Redox-sensing transcriptional repressor Rex (212 aa).

The H-T-H motif DNA-binding region spans 17 to 56; it reads LYARSLRYLLEEGIHSVSSQELGERINVTAAQIRKDLSYF. Residue 91-96 coordinates NAD(+); the sequence is GIGLLG.

This sequence belongs to the transcriptional regulatory Rex family. As to quaternary structure, homodimer.

It localises to the cytoplasm. Functionally, modulates transcription in response to changes in cellular NADH/NAD(+) redox state. The chain is Redox-sensing transcriptional repressor Rex from Chloroflexus aggregans (strain MD-66 / DSM 9485).